Here is a 219-residue protein sequence, read N- to C-terminus: GTP cyclohydrolase-2 (219 aa).

GTP is bound at residue 51–55; it reads RIHSE. The Zn(2+) site is built by cysteine 56, cysteine 67, and cysteine 69. GTP contacts are provided by residues glutamine 72, 94–96, and threonine 116; that span reads EGR. Aspartate 128 functions as the Proton acceptor in the catalytic mechanism. Residue arginine 130 is the Nucleophile of the active site. GTP is bound by residues threonine 151 and lysine 156.

It belongs to the GTP cyclohydrolase II family. The cofactor is Zn(2+).

It carries out the reaction GTP + 4 H2O = 2,5-diamino-6-hydroxy-4-(5-phosphoribosylamino)-pyrimidine + formate + 2 phosphate + 3 H(+). The protein operates within cofactor biosynthesis; riboflavin biosynthesis; 5-amino-6-(D-ribitylamino)uracil from GTP: step 1/4. In terms of biological role, catalyzes the conversion of GTP to 2,5-diamino-6-ribosylamino-4(3H)-pyrimidinone 5'-phosphate (DARP), formate and pyrophosphate. This is GTP cyclohydrolase-2 from Pasteurella multocida (strain Pm70).